The primary structure comprises 500 residues: Probable malate:quinone oxidoreductase (500 aa).

Belongs to the MQO family. Requires FAD as cofactor.

It catalyses the reaction (S)-malate + a quinone = a quinol + oxaloacetate. The protein operates within carbohydrate metabolism; tricarboxylic acid cycle; oxaloacetate from (S)-malate (quinone route): step 1/1. In Bacillus cereus (strain B4264), this protein is Probable malate:quinone oxidoreductase.